The following is a 308-amino-acid chain: N-acetylgalactosamine kinase AgaK (308 aa).

Residues 4–11 and 132–139 contribute to the ATP site; these read GLDIGGTK and GTGGGLCI. Zn(2+) is bound by residues His156, Cys174, Cys176, and Cys181.

The protein belongs to the ROK (NagC/XylR) family.

The protein localises to the cytoplasm. It carries out the reaction N-acetyl-D-galactosamine + ATP = N-acetyl-D-galactosamine 6-phosphate + ADP + H(+). The enzyme catalyses N-acetyl-D-glucosamine + ATP = N-acetyl-D-glucosamine 6-phosphate + ADP + H(+). In terms of biological role, involved in the pathway of N-acetyl-D-galactosamine degradation. Catalyzes the phosphorylation of N-acetyl-D-galactosamine (GalNAc) to yield D-galactosamine 6-phosphate (GalN-6-P). It can also phosphorylate N-acetylglucosamine (GlcNAc). In Shewanella sp. (strain ANA-3), this protein is N-acetylgalactosamine kinase AgaK.